A 591-amino-acid chain; its full sequence is Alpha-(1-&gt;6)-mannopyranosyltransferase Rv1459c (591 aa).

Transmembrane regions (helical) follow at residues 40–60 (FGAT…ARPV), 80–100 (VSLT…LMLG), 117–137 (TLLL…KDVY), 201–221 (IVAA…LIVW), 235–255 (VSAL…VAGI), 259–279 (ALML…LDMA), 321–341 (EWGP…SSQV), 367–387 (LLLA…ILGW), 408–428 (WMSP…LLGL), 441–461 (AIGV…VLRG), 473–493 (LAVT…WAII), 502–522 (PGFR…GPTA), and 527–547 (FALF…ILLI). The segment at 569–591 (ESASKTPATRRPTAAPDAYADST) is disordered. Over residues 574–584 (TPATRRPTAAP) the composition is skewed to low complexity.

The protein belongs to the MptA/B family.

It localises to the membrane. Catalyzes the addition of alpha-(1-&gt;6)-mannose residue. The chain is Alpha-(1-&gt;6)-mannopyranosyltransferase Rv1459c from Mycobacterium tuberculosis (strain ATCC 25618 / H37Rv).